We begin with the raw amino-acid sequence, 457 residues long: Putative hexose transporter 12 (457 aa).

Topologically, residues 1–2 (MG) are cytoplasmic. A helical transmembrane segment spans residues 3–23 (LIVSIFNIGCAIGGIVLSKVG). At 24–29 (DIYGRR) the chain is on the extracellular side. The chain crosses the membrane as a helical span at residues 30-50 (IGLITVTAIYVVGILIQITSI). At 51–60 (NKWYQYFIGR) the chain is on the cytoplasmic side. The chain crosses the membrane as a helical span at residues 61–81 (IISGIGVGGIAVLSPMLISEV). The Extracellular portion of the chain corresponds to 82–87 (APKHIR). The helical transmembrane segment at 88–108 (GTLVQLYQLMGTMGIFLGYCT) threads the bilayer. At 109 to 122 (NYGTKNYHNATQWR) the chain is on the cytoplasmic side. Residues 123-143 (VGLGLCFAWATFMVSGMMFVP) traverse the membrane as a helical segment. The Extracellular portion of the chain corresponds to 144-247 (ESPRYLIEVG…KSVGLKDSFQ (104 aa)). A glycan (N-linked (GlcNAc...) asparagine) is linked at Asn194. Residues 248–268 (TSIIIGVVNFFSSFIAVYTIE) traverse the membrane as a helical segment. Residues 269–274 (RFGRRT) lie on the Cytoplasmic side of the membrane. A helical membrane pass occupies residues 275-295 (CLLWGAASMLCCFAVFASVGV). The Extracellular segment spans residues 296–319 (TKLWPQGSSHQDITSQGAGNCMIV). A helical membrane pass occupies residues 320–340 (FTMFFIFSFATTWAGGCFVIV). Topologically, residues 341-353 (SETFPLRAKSRGM) are cytoplasmic. The chain crosses the membrane as a helical span at residues 354 to 374 (AIATAANWMWGFLISFFTPFI). Topologically, residues 375 to 379 (TGAIN) are extracellular. The helical transmembrane segment at 380-400 (FYYGYVFLGCLVFAYFYVFFF) threads the bilayer. Topologically, residues 401-457 (VPETKGLTLEEVNTMWLEGVPAWKSASWVPPERRTADYDADAIDHDNRPIYKRFFSS) are cytoplasmic.

This sequence belongs to the major facilitator superfamily. Sugar transporter (TC 2.A.1.1) family.

The protein resides in the membrane. Its function is as follows. Probable glucose transporter. This Saccharomyces cerevisiae (strain ATCC 204508 / S288c) (Baker's yeast) protein is Putative hexose transporter 12 (HXT12).